Here is a 288-residue protein sequence, read N- to C-terminus: Phosphatidylserine decarboxylase proenzyme (288 aa).

Active-site charge relay system; for autoendoproteolytic cleavage activity residues include aspartate 88, histidine 145, and serine 248. The active-site Schiff-base intermediate with substrate; via pyruvic acid; for decarboxylase activity is serine 248. Position 248 is a pyruvic acid (Ser); by autocatalysis (serine 248).

This sequence belongs to the phosphatidylserine decarboxylase family. PSD-B subfamily. Prokaryotic type I sub-subfamily. Heterodimer of a large membrane-associated beta subunit and a small pyruvoyl-containing alpha subunit. It depends on pyruvate as a cofactor. Post-translationally, is synthesized initially as an inactive proenzyme. Formation of the active enzyme involves a self-maturation process in which the active site pyruvoyl group is generated from an internal serine residue via an autocatalytic post-translational modification. Two non-identical subunits are generated from the proenzyme in this reaction, and the pyruvate is formed at the N-terminus of the alpha chain, which is derived from the carboxyl end of the proenzyme. The autoendoproteolytic cleavage occurs by a canonical serine protease mechanism, in which the side chain hydroxyl group of the serine supplies its oxygen atom to form the C-terminus of the beta chain, while the remainder of the serine residue undergoes an oxidative deamination to produce ammonia and the pyruvoyl prosthetic group on the alpha chain. During this reaction, the Ser that is part of the protease active site of the proenzyme becomes the pyruvoyl prosthetic group, which constitutes an essential element of the active site of the mature decarboxylase.

It localises to the cell membrane. The catalysed reaction is a 1,2-diacyl-sn-glycero-3-phospho-L-serine + H(+) = a 1,2-diacyl-sn-glycero-3-phosphoethanolamine + CO2. The protein operates within phospholipid metabolism; phosphatidylethanolamine biosynthesis; phosphatidylethanolamine from CDP-diacylglycerol: step 2/2. Its function is as follows. Catalyzes the formation of phosphatidylethanolamine (PtdEtn) from phosphatidylserine (PtdSer). This is Phosphatidylserine decarboxylase proenzyme from Azoarcus sp. (strain BH72).